The following is an 845-amino-acid chain: Protein P (845 aa).

Residues 1–179 (MPLSYQHFRK…FCGSPYSWEQ (179 aa)) are terminal protein domain (TP). The spacer stretch occupies residues 180–348 (ELQHGRLVIK…YCLSHLVNLR (169 aa)). The interval 226-245 (GLQPHQGPLASSQPGRSGSI) is disordered. The tract at residues 349-692 (EDWGPCDEHG…YMNLYPVARQ (344 aa)) is polymerase/reverse transcriptase domain (RT). In terms of domain architecture, Reverse transcriptase spans 359–602 (EHHIRIPRTP…YSLNFMGYII (244 aa)). 3 residues coordinate Mg(2+): Asp431, Asp553, and Asp554.

It belongs to the hepadnaviridae P protein family.

The catalysed reaction is DNA(n) + a 2'-deoxyribonucleoside 5'-triphosphate = DNA(n+1) + diphosphate. It catalyses the reaction Endonucleolytic cleavage to 5'-phosphomonoester.. With respect to regulation, activated by host HSP70 and HSP40 in vitro to be able to bind the epsilon loop of the pgRNA. Because deletion of the RNase H region renders the protein partly chaperone-independent, the chaperones may be needed indirectly to relieve occlusion of the RNA-binding site by this domain. Inhibited by several reverse-transcriptase inhibitors: Lamivudine, Adefovir and Entecavir. Its function is as follows. Multifunctional enzyme that converts the viral RNA genome into dsDNA in viral cytoplasmic capsids. This enzyme displays a DNA polymerase activity that can copy either DNA or RNA templates, and a ribonuclease H (RNase H) activity that cleaves the RNA strand of RNA-DNA heteroduplexes in a partially processive 3'- to 5'-endonucleasic mode. Neo-synthesized pregenomic RNA (pgRNA) are encapsidated together with the P protein, and reverse-transcribed inside the nucleocapsid. Initiation of reverse-transcription occurs first by binding the epsilon loop on the pgRNA genome, and is initiated by protein priming, thereby the 5'-end of (-)DNA is covalently linked to P protein. Partial (+)DNA is synthesized from the (-)DNA template and generates the relaxed circular DNA (RC-DNA) genome. After budding and infection, the RC-DNA migrates in the nucleus, and is converted into a plasmid-like covalently closed circular DNA (cccDNA). The activity of P protein does not seem to be necessary for cccDNA generation, and is presumably released from (+)DNA by host nuclear DNA repair machinery. The chain is Protein P from Homo sapiens (Human).